The sequence spans 818 residues: ATM interactor (818 aa).

Over residues 1 to 34 (MAATEAAAADSAGPAPGVPATPASTRGAAAASSP) the composition is skewed to low complexity. The segment at 1–62 (MAATEAAAAD…RAAAPVPPAR (62 aa)) is disordered. The C2H2-type 1 zinc-finger motif lies at 80-105 (ILCTVRGCGKILPNSPALNMHLVKSH). The C2H2-type 2; degenerate zinc-finger motif lies at 161-181 (HKCSKCSNSYGTEWDLKRHEE). Over residues 210–221 (HEIPAEHRDPPS) the composition is skewed to basic and acidic residues. Disordered regions lie at residues 210–284 (HEIP…ATPP) and 603–625 (DNRSLLSDTNPGPDAQLPAGSAQ). Positions 219–437 (PPSKKRKMES…PDSSVSSCSQ (219 aa)) are required for formation of RAD51 foci. Composition is skewed to polar residues over residues 229–243 (YLQNQKLSSKTTEPL) and 603–612 (DNRSLLSDTN).

As to quaternary structure, interacts via its C-terminus with ATM. Interacts with DYNLL; this interaction inhibits ATMIN transcriptional activity and hence may play a role in a feedback loop whereby DYNLL1 inhibits transactivation of its own promoter by ATMIN. ATMIN.

Its subcellular location is the nucleus. Its function is as follows. Transcription factor. Plays a crucial role in cell survival and RAD51 foci formation in response to methylating DNA damage. Involved in regulating the activity of ATM in the absence of DNA damage. May play a role in stabilizing ATM. Binds to the DYNLL1 promoter and activates its transcription. The polypeptide is ATM interactor (Mus musculus (Mouse)).